The following is a 130-amino-acid chain: Small ribosomal subunit protein uS9 (130 aa).

Belongs to the universal ribosomal protein uS9 family.

The sequence is that of Small ribosomal subunit protein uS9 from Aeromonas hydrophila subsp. hydrophila (strain ATCC 7966 / DSM 30187 / BCRC 13018 / CCUG 14551 / JCM 1027 / KCTC 2358 / NCIMB 9240 / NCTC 8049).